We begin with the raw amino-acid sequence, 325 residues long: Lipoyl synthase (325 aa).

Residues 1 to 31 (MANLIDNTARSAASDARAARHPEKQKRADTP) are disordered. Positions 17 to 31 (RAARHPEKQKRADTP) are enriched in basic and acidic residues. [4Fe-4S] cluster is bound by residues C65, C70, C76, C91, C95, C98, and S304. The Radical SAM core domain occupies 77–293 (WEQKHATFMI…ETIARAKGFL (217 aa)).

This sequence belongs to the radical SAM superfamily. Lipoyl synthase family. [4Fe-4S] cluster is required as a cofactor.

The protein localises to the cytoplasm. The catalysed reaction is [[Fe-S] cluster scaffold protein carrying a second [4Fe-4S](2+) cluster] + N(6)-octanoyl-L-lysyl-[protein] + 2 oxidized [2Fe-2S]-[ferredoxin] + 2 S-adenosyl-L-methionine + 4 H(+) = [[Fe-S] cluster scaffold protein] + N(6)-[(R)-dihydrolipoyl]-L-lysyl-[protein] + 4 Fe(3+) + 2 hydrogen sulfide + 2 5'-deoxyadenosine + 2 L-methionine + 2 reduced [2Fe-2S]-[ferredoxin]. It functions in the pathway protein modification; protein lipoylation via endogenous pathway; protein N(6)-(lipoyl)lysine from octanoyl-[acyl-carrier-protein]: step 2/2. Functionally, catalyzes the radical-mediated insertion of two sulfur atoms into the C-6 and C-8 positions of the octanoyl moiety bound to the lipoyl domains of lipoate-dependent enzymes, thereby converting the octanoylated domains into lipoylated derivatives. The chain is Lipoyl synthase from Maricaulis maris (strain MCS10) (Caulobacter maris).